Consider the following 140-residue polypeptide: L-fucose mutarotase (140 aa).

His22 functions as the Proton donor in the catalytic mechanism. Residues Asp30, Arg107, and 129-131 (YGN) contribute to the substrate site.

Belongs to the RbsD / FucU family. FucU mutarotase subfamily. As to quaternary structure, homodecamer.

The protein resides in the cytoplasm. The catalysed reaction is alpha-L-fucose = beta-L-fucose. It participates in carbohydrate metabolism; L-fucose metabolism. Its function is as follows. Involved in the anomeric conversion of L-fucose. This Salmonella gallinarum (strain 287/91 / NCTC 13346) protein is L-fucose mutarotase.